The chain runs to 309 residues: Probable cell division protein WhiA (309 aa).

Positions 275 to 309 form a DNA-binding region, H-T-H motif; sequence SLKELGELVPGGPISKSGINHRLRKINQYAEKLRA.

Belongs to the WhiA family.

Functionally, involved in cell division and chromosome segregation. This is Probable cell division protein WhiA from Pediococcus pentosaceus (strain ATCC 25745 / CCUG 21536 / LMG 10740 / 183-1w).